The chain runs to 117 residues: MKFIFMYFIFIILISSILLLLNKFISIYKKKDYEKSSPFECGFNPITKANLPFSLPFFLMTMMFLIFDVEIILFLPIIFYLKSSSTMISYLMISIFLILLITTLILEWMNNYLNWLF.

3 helical membrane-spanning segments follow: residues 1-21 (MKFIFMYFIFIILISSILLLL), 58-78 (FLMTMMFLIFDVEIILFLPII), and 86-106 (TMISYLMISIFLILLITTLIL).

Belongs to the complex I subunit 3 family.

It localises to the mitochondrion membrane. It catalyses the reaction a ubiquinone + NADH + 5 H(+)(in) = a ubiquinol + NAD(+) + 4 H(+)(out). In terms of biological role, core subunit of the mitochondrial membrane respiratory chain NADH dehydrogenase (Complex I) that is believed to belong to the minimal assembly required for catalysis. Complex I functions in the transfer of electrons from NADH to the respiratory chain. The immediate electron acceptor for the enzyme is believed to be ubiquinone. This is NADH-ubiquinone oxidoreductase chain 3 (ND3) from Apis mellifera ligustica (Common honeybee).